The sequence spans 319 residues: MIVVTGGAGFIGSNLVKQLNAQGRTDIVVIDDLTDGTKFVNLVDLTIADYMDKDEFQARIVSGDEFEEWDDGIEVIFHEGACSATTEWNGKFIMEVNYEYSKDLFHYCIEREIPFIYASSAATYGGRNDNFIEDPKFEQPLNVYGYSKQLFDQYVRRWMPEINSQVVGLKYFNVYGPREQHKGSMASVAFHLNTQVKQGDNPKLFEGCDGFPDGGQMRDFIYVDDVCKVNLWFWQNPQHSGIFNCGTGRAEPFQNVAEAVIKHHQQGAIEYIPFPDHLKGRYQSFTQADMTRLRGVGYDGEFKTVAEGVADYMAWLNRA.

NADP(+) contacts are provided by residues 10–11 (FI), 31–32 (DD), lysine 38, lysine 53, and 79–83 (EGACS). Tyrosine 144 functions as the Proton acceptor in the catalytic mechanism. Lysine 148 is an NADP(+) binding site. Asparagine 173 is a substrate binding site. NADP(+) is bound by residues valine 174 and lysine 182. Residue lysine 182 is the Proton acceptor of the active site. Residues serine 184, histidine 191, 205–208 (FEGC), arginine 218, and tyrosine 282 contribute to the substrate site.

This sequence belongs to the NAD(P)-dependent epimerase/dehydratase family. HldD subfamily. Homopentamer. The cofactor is NADP(+).

It catalyses the reaction ADP-D-glycero-beta-D-manno-heptose = ADP-L-glycero-beta-D-manno-heptose. The protein operates within nucleotide-sugar biosynthesis; ADP-L-glycero-beta-D-manno-heptose biosynthesis; ADP-L-glycero-beta-D-manno-heptose from D-glycero-beta-D-manno-heptose 7-phosphate: step 4/4. Catalyzes the interconversion between ADP-D-glycero-beta-D-manno-heptose and ADP-L-glycero-beta-D-manno-heptose via an epimerization at carbon 6 of the heptose. This chain is ADP-L-glycero-D-manno-heptose-6-epimerase, found in Aeromonas salmonicida (strain A449).